A 297-amino-acid polypeptide reads, in one-letter code: Formamidopyrimidine-DNA glycosylase (297 aa).

P2 (schiff-base intermediate with DNA) is an active-site residue. The Proton donor role is filled by E3. K58 acts as the Proton donor; for beta-elimination activity in catalysis. Positions 106, 133, and 178 each coordinate DNA. Residues 263 to 297 (FVYDRAGEPCRICGTPIRQILQGQRSTFYCPHCQH) form an FPG-type zinc finger. Residue R287 is the Proton donor; for delta-elimination activity of the active site.

This sequence belongs to the FPG family. In terms of assembly, monomer. It depends on Zn(2+) as a cofactor.

The catalysed reaction is Hydrolysis of DNA containing ring-opened 7-methylguanine residues, releasing 2,6-diamino-4-hydroxy-5-(N-methyl)formamidopyrimidine.. The enzyme catalyses 2'-deoxyribonucleotide-(2'-deoxyribose 5'-phosphate)-2'-deoxyribonucleotide-DNA = a 3'-end 2'-deoxyribonucleotide-(2,3-dehydro-2,3-deoxyribose 5'-phosphate)-DNA + a 5'-end 5'-phospho-2'-deoxyribonucleoside-DNA + H(+). In terms of biological role, involved in base excision repair of DNA damaged by oxidation or by mutagenic agents. Acts as a DNA glycosylase that recognizes and removes damaged bases. Has a preference for oxidized purines, such as 7,8-dihydro-8-oxoguanine (8-oxoG). Has AP (apurinic/apyrimidinic) lyase activity and introduces nicks in the DNA strand. Cleaves the DNA backbone by beta-delta elimination to generate a single-strand break at the site of the removed base with both 3'- and 5'-phosphates. The protein is Formamidopyrimidine-DNA glycosylase of Cupriavidus metallidurans (strain ATCC 43123 / DSM 2839 / NBRC 102507 / CH34) (Ralstonia metallidurans).